Reading from the N-terminus, the 221-residue chain is 6-phosphogluconate phosphatase (221 aa).

The active-site Nucleophile is aspartate 10. Aspartate 10, aspartate 12, and aspartate 167 together coordinate Mg(2+). Residue 10–12 participates in substrate binding; the sequence is DCD.

This sequence belongs to the HAD-like hydrolase superfamily. CbbY/CbbZ/Gph/YieH family. Requires Mg(2+) as cofactor. Mn(2+) serves as cofactor. Co(2+) is required as a cofactor. It depends on Zn(2+) as a cofactor.

Catalyzes strongly the dephosphorylation of 6-phosphogluconate (6P-Glu) and slightly the dephosphorylation of dihydroxyacetone phosphate (DHAP) and phosphoenolpyruvate (PEP). Also hydrolyzes both purines (GMP and IMP) and pyrimidines as secondary substrates. This Escherichia coli (strain K12) protein is 6-phosphogluconate phosphatase (yieH).